The sequence spans 129 residues: Transcription antitermination protein NusB (129 aa).

This sequence belongs to the NusB family.

In terms of biological role, involved in transcription antitermination. Required for transcription of ribosomal RNA (rRNA) genes. Binds specifically to the boxA antiterminator sequence of the ribosomal RNA (rrn) operons. The sequence is that of Transcription antitermination protein NusB from Staphylococcus aureus (strain bovine RF122 / ET3-1).